A 498-amino-acid chain; its full sequence is Glycerol kinase (498 aa).

Thr-12 contributes to the ADP binding site. ATP contacts are provided by Thr-12, Thr-13, and Ser-14. Thr-12 contacts sn-glycerol 3-phosphate. Residue Arg-16 participates in ADP binding. Sn-glycerol 3-phosphate-binding residues include Arg-82, Glu-83, and Tyr-134. Glycerol contacts are provided by Arg-82, Glu-83, and Tyr-134. His-230 is modified (phosphohistidine; by HPr). Asp-244 is a binding site for sn-glycerol 3-phosphate. Glycerol-binding residues include Asp-244 and Gln-245. ADP contacts are provided by Thr-266 and Gly-309. ATP is bound by residues Thr-266, Gly-309, Gln-313, and Gly-410. Residues Gly-410 and Asn-414 each coordinate ADP.

This sequence belongs to the FGGY kinase family. Homotetramer and homodimer (in equilibrium). Post-translationally, the phosphoenolpyruvate-dependent sugar phosphotransferase system (PTS), including enzyme I, and histidine-containing protein (HPr) are required for the phosphorylation, which leads to the activation of the enzyme.

It catalyses the reaction glycerol + ATP = sn-glycerol 3-phosphate + ADP + H(+). It participates in polyol metabolism; glycerol degradation via glycerol kinase pathway; sn-glycerol 3-phosphate from glycerol: step 1/1. With respect to regulation, activated by phosphorylation and inhibited by fructose 1,6-bisphosphate (FBP). Key enzyme in the regulation of glycerol uptake and metabolism. Catalyzes the phosphorylation of glycerol to yield sn-glycerol 3-phosphate. This chain is Glycerol kinase, found in Staphylococcus aureus (strain MRSA252).